The following is a 101-amino-acid chain: MMLEHVLVLSAYLFSIGIYGLITSRNMVRALMCLELILNAVNINLVTFSDLFDSRQLKGDIFSIFVIAIAAAEAAIGPAIVSSIYRNRKSTRINQSNLLNK.

The next 3 membrane-spanning stretches (helical) occupy residues M2–I22, M32–F52, and I61–V81.

Belongs to the complex I subunit 4L family. As to quaternary structure, NDH is composed of at least 16 different subunits, 5 of which are encoded in the nucleus.

The protein resides in the plastid. It localises to the chloroplast thylakoid membrane. The catalysed reaction is a plastoquinone + NADH + (n+1) H(+)(in) = a plastoquinol + NAD(+) + n H(+)(out). It catalyses the reaction a plastoquinone + NADPH + (n+1) H(+)(in) = a plastoquinol + NADP(+) + n H(+)(out). Its function is as follows. NDH shuttles electrons from NAD(P)H:plastoquinone, via FMN and iron-sulfur (Fe-S) centers, to quinones in the photosynthetic chain and possibly in a chloroplast respiratory chain. The immediate electron acceptor for the enzyme in this species is believed to be plastoquinone. Couples the redox reaction to proton translocation, and thus conserves the redox energy in a proton gradient. In Illicium oligandrum (Star anise), this protein is NAD(P)H-quinone oxidoreductase subunit 4L, chloroplastic.